The chain runs to 115 residues: Anamorsin homolog 1 (115 aa).

Residues 30–115 (VKEATKGEDC…KVKLNLTDDI (86 aa)) are disordered. Residues C39, C46, C49, and C51 each coordinate [2Fe-2S] cluster. A fe-S binding site A region spans residues 39 to 51 (CTTRRRACKNCTC). [4Fe-4S] cluster is bound by residues C77, C80, C88, and C91. 2 short sequence motifs (cx2C motif) span residues 77 to 80 (CGNC) and 88 to 91 (CATC). A fe-S binding site B region spans residues 77–91 (CGNCAKGDAFRCATC).

This sequence belongs to the anamorsin family. Monomer. The cofactor is [2Fe-2S] cluster. [4Fe-4S] cluster serves as cofactor.

Its subcellular location is the cytoplasm. It is found in the mitochondrion intermembrane space. Component of the cytosolic iron-sulfur (Fe-S) protein assembly (CIA) machinery. Required for the maturation of extramitochondrial Fe-S proteins. Part of an electron transfer chain functioning in an early step of cytosolic Fe-S biogenesis, facilitating the de novo assembly of a [4Fe-4S] cluster on the cytosolic Fe-S scaffold complex. Electrons are transferred from NADPH via a FAD- and FMN-containing diflavin oxidoreductase. Together with the diflavin oxidoreductase, also required for the assembly of the diferric tyrosyl radical cofactor of ribonucleotide reductase (RNR), probably by providing electrons for reduction during radical cofactor maturation in the catalytic small subunit. This Trypanosoma cruzi (strain CL Brener) protein is Anamorsin homolog 1.